The primary structure comprises 740 residues: Ion-translocating oxidoreductase complex subunit C (740 aa).

2 4Fe-4S ferredoxin-type domains span residues 369-397 and 407-436; these read GEPQ…QQLY and KATT…VQYF. [4Fe-4S] cluster-binding residues include cysteine 377, cysteine 380, cysteine 383, cysteine 387, cysteine 416, cysteine 419, cysteine 422, and cysteine 426. Disordered regions lie at residues 571 to 590 and 602 to 716; these read LEQQ…RKAA and KLEQ…DPRK. 2 stretches are compositionally biased toward low complexity: residues 573-583 and 637-647; these read QQQANAEPEQQ.

The protein belongs to the 4Fe4S bacterial-type ferredoxin family. RnfC subfamily. In terms of assembly, the complex is composed of six subunits: RsxA, RsxB, RsxC, RsxD, RsxE and RsxG. The cofactor is [4Fe-4S] cluster.

The protein resides in the cell inner membrane. Its function is as follows. Part of a membrane-bound complex that couples electron transfer with translocation of ions across the membrane. Required to maintain the reduced state of SoxR. Probably transfers electron from NAD(P)H to SoxR. This chain is Ion-translocating oxidoreductase complex subunit C, found in Escherichia coli (strain K12).